Here is a 583-residue protein sequence, read N- to C-terminus: Isocitrate dehydrogenase kinase/phosphatase (583 aa).

Residues 315–321 (APGIRGM) and K336 contribute to the ATP site. The active site involves D371.

This sequence belongs to the AceK family.

It localises to the cytoplasm. The enzyme catalyses L-seryl-[isocitrate dehydrogenase] + ATP = O-phospho-L-seryl-[isocitrate dehydrogenase] + ADP + H(+). In terms of biological role, bifunctional enzyme which can phosphorylate or dephosphorylate isocitrate dehydrogenase (IDH) on a specific serine residue. This is a regulatory mechanism which enables bacteria to bypass the Krebs cycle via the glyoxylate shunt in response to the source of carbon. When bacteria are grown on glucose, IDH is fully active and unphosphorylated, but when grown on acetate or ethanol, the activity of IDH declines drastically concomitant with its phosphorylation. This chain is Isocitrate dehydrogenase kinase/phosphatase, found in Salmonella dublin (strain CT_02021853).